The chain runs to 119 residues: MASSVVVALLVLLSLSGLEAIQHAPKIQVYSRHPAENGKPNFLNCYVSGFHPSDIEVDLLKNGKKIEKVEHSDLSFSKDWSFYLLYYTEFTPSEKDEYACRVSHVTFSTPKTVKWDRNI.

The first 20 residues, 1–20 (MASSVVVALLVLLSLSGLEA), serve as a signal peptide directing secretion. Residues 25 to 114 (PKIQVYSRHP…VTFSTPKTVK (90 aa)) enclose the Ig-like C1-type domain. Cys45 and Cys100 are joined by a disulfide.

Belongs to the beta-2-microglobulin family. As to quaternary structure, heterodimer of an alpha chain and a beta chain. Beta-2-microglobulin is the beta-chain of major histocompatibility complex class I molecules.

The protein localises to the secreted. In terms of biological role, component of the class I major histocompatibility complex (MHC). Involved in the presentation of peptide antigens to the immune system. The polypeptide is Beta-2-microglobulin (B2M) (Callithrix aurita (White-eared marmoset)).